The following is a 451-amino-acid chain: Tubulin beta chain (451 aa).

GTP contacts are provided by Q11, E69, S138, G142, T143, G144, N204, and N226. Residue E69 participates in Mg(2+) binding. The disordered stretch occupies residues 426-451; the sequence is QDATAEEEGEFDENEGAEGEEQPADY. A compositionally biased stretch (acidic residues) spans 429 to 451; sequence TAEEEGEFDENEGAEGEEQPADY.

Belongs to the tubulin family. Dimer of alpha and beta chains. A typical microtubule is a hollow water-filled tube with an outer diameter of 25 nm and an inner diameter of 15 nM. Alpha-beta heterodimers associate head-to-tail to form protofilaments running lengthwise along the microtubule wall with the beta-tubulin subunit facing the microtubule plus end conferring a structural polarity. Microtubules usually have 13 protofilaments but different protofilament numbers can be found in some organisms and specialized cells. The cofactor is Mg(2+).

Its subcellular location is the cytoplasm. The protein localises to the cytoskeleton. In terms of biological role, tubulin is the major constituent of microtubules, a cylinder consisting of laterally associated linear protofilaments composed of alpha- and beta-tubulin heterodimers. Microtubules grow by the addition of GTP-tubulin dimers to the microtubule end, where a stabilizing cap forms. Below the cap, tubulin dimers are in GDP-bound state, owing to GTPase activity of alpha-tubulin. This chain is Tubulin beta chain, found in Naegleria pringsheimi (Amoeba).